Consider the following 657-residue polypeptide: tRNA 5-methylaminomethyl-2-thiouridine biosynthesis bifunctional protein MnmC (657 aa).

The tRNA (mnm(5)s(2)U34)-methyltransferase stretch occupies residues 1 to 233 (MPRALEPAEP…KWQMTVASFR (233 aa)). The interval 257–657 (IGAGLAGCAV…LRALRHGHTG (401 aa)) is FAD-dependent cmnm(5)s(2)U34 oxidoreductase.

The protein in the N-terminal section; belongs to the methyltransferase superfamily. tRNA (mnm(5)s(2)U34)-methyltransferase family. In the C-terminal section; belongs to the DAO family. FAD serves as cofactor.

It localises to the cytoplasm. The catalysed reaction is 5-aminomethyl-2-thiouridine(34) in tRNA + S-adenosyl-L-methionine = 5-methylaminomethyl-2-thiouridine(34) in tRNA + S-adenosyl-L-homocysteine + H(+). In terms of biological role, catalyzes the last two steps in the biosynthesis of 5-methylaminomethyl-2-thiouridine (mnm(5)s(2)U) at the wobble position (U34) in tRNA. Catalyzes the FAD-dependent demodification of cmnm(5)s(2)U34 to nm(5)s(2)U34, followed by the transfer of a methyl group from S-adenosyl-L-methionine to nm(5)s(2)U34, to form mnm(5)s(2)U34. In Cupriavidus necator (strain ATCC 17699 / DSM 428 / KCTC 22496 / NCIMB 10442 / H16 / Stanier 337) (Ralstonia eutropha), this protein is tRNA 5-methylaminomethyl-2-thiouridine biosynthesis bifunctional protein MnmC.